A 366-amino-acid polypeptide reads, in one-letter code: Bacteriochlorophyll a protein (366 aa).

Positions 110, 145, 290, 297, and 298 each coordinate bacteriochlorophyll a.

Homotrimer. Each subunit contains 7 molecules of bacteriochlorophyll a.

Functionally, intermediary in the transfer of excitation energy from the chlorophyll to the reaction centers. This is Bacteriochlorophyll a protein from Prosthecochloris aestuarii.